A 553-amino-acid chain; its full sequence is Urocanate hydratase (553 aa).

NAD(+) is bound by residues 45–46 (GG), Gln123, 169–171 (GMG), Asp189, Arg194, 235–236 (NA), 256–260 (QTSAH), 266–267 (YV), Tyr315, and Gly485.

The protein belongs to the urocanase family. It depends on NAD(+) as a cofactor.

The protein localises to the cytoplasm. The catalysed reaction is 4-imidazolone-5-propanoate = trans-urocanate + H2O. Its pathway is amino-acid degradation; L-histidine degradation into L-glutamate; N-formimidoyl-L-glutamate from L-histidine: step 2/3. Its function is as follows. Catalyzes the conversion of urocanate to 4-imidazolone-5-propionate. The sequence is that of Urocanate hydratase from Staphylococcus aureus (strain COL).